The primary structure comprises 770 residues: ATP-dependent RNA helicase HCA4 (770 aa).

Positions 41-69 match the Q motif motif; that stretch reads KFFKDLPISDPTLKGLRESSFIKLTEIQA. Positions 72-246 constitute a Helicase ATP-binding domain; sequence IPVSLQGHDV…RLSLTDYKTV (175 aa). 85-92 serves as a coordination point for ATP; that stretch reads AKTGSGKT. A DEAD box motif is present at residues 194 to 197; it reads DEAD. Residues 278-437 enclose the Helicase C-terminal domain; it reads KLDILFSFIK…SIKPQLQSLL (160 aa). Phosphoserine occurs at positions 692, 710, 714, and 743. Positions 705–724 are disordered; it reads GTGNLSDDMSDGDMPDSEGH.

Belongs to the DEAD box helicase family. DDX10/DBP4 subfamily. Interacts with the U3 and U14 snoRNAs. Associates with pre-ribosomal complexes.

It is found in the nucleus. Its subcellular location is the nucleolus. The catalysed reaction is ATP + H2O = ADP + phosphate + H(+). ATP-dependent RNA helicase required for ribosome biogenesis. Involved in the release of U14 snoRNA in pre-ribosomal complexes. Required for pre-rRNA cleavage at site A2. In Saccharomyces cerevisiae (strain ATCC 204508 / S288c) (Baker's yeast), this protein is ATP-dependent RNA helicase HCA4 (HCA4).